The primary structure comprises 104 residues: UPF0213 protein YsiG (104 aa).

Positions Asn-2–Leu-79 constitute a GIY-YIG domain.

Belongs to the UPF0213 family.

The polypeptide is UPF0213 protein YsiG (ysiG) (Lactococcus lactis subsp. lactis (strain IL1403) (Streptococcus lactis)).